The following is a 695-amino-acid chain: A-kinase anchor protein 17A (695 aa).

The segment at 83-112 is PKA-RI and PKA-RII subunit binding domain; sequence VENKSLVKSFLACLDGKTIKLSGFSDILKV. Lys-118 is covalently cross-linked (Glycyl lysine isopeptide (Lys-Gly) (interchain with G-Cter in SUMO1); alternate). Lys-118 participates in a covalent cross-link: Glycyl lysine isopeptide (Lys-Gly) (interchain with G-Cter in SUMO2); alternate. In terms of domain architecture, RRM spans 147–256; sequence DTIHLEGLPC…KAVACNIKVS (110 aa). The interval 279 to 337 is disordered; sequence QELEQQREEQKRREKEAEERQRAEERKQKELEELERERKREEKLRKREQKQRDRELRRN. The segment at 425 to 454 is PKA-RI-alpha subunit binding domain; sequence LGLQRKERELRERLLSILLSKKPDDSHTHD. The interval 482-695 is disordered; that stretch reads TTLHPLGGQP…PSRHRSTWNR (214 aa). Phosphoserine is present on Ser-537. Residues 567–585 show a composition bias toward basic and acidic residues; that stretch reads VSRKDTRSEQDKCNREPSK. 2 stretches are compositionally biased toward basic residues: residues 598–609 and 618–628; these read RHKRERSRARRA and RKERRPHKKHA. A compositionally biased stretch (basic and acidic residues) spans 629-644; the sequence is YKDDSPRRRSTSPDHT. Ser-633 is subject to Phosphoserine. 2 stretches are compositionally biased toward basic residues: residues 645–658 and 666–695; these read RSRR…HRRE and SASR…TWNR.

Monomer. Component of the spliceosome. Interacts with ZRANB2 and SFRS1/ASF through its Arg/Ser-rich domain. Interacts with RI and RII subunits of PKA. In terms of tissue distribution, widely expressed. Found in heart, brain, lung, liver, skeletal muscle, kidney and pancreas. Expressed in activated B-cells and placenta. Expressed in all cell lines tested including Jurkat-TAg, U-937 and HEK293 cells.

Its subcellular location is the nucleus speckle. In terms of biological role, splice factor regulating alternative splice site selection for certain mRNA precursors. Mediates regulation of pre-mRNA splicing in a PKA-dependent manner. This chain is A-kinase anchor protein 17A (AKAP17A), found in Homo sapiens (Human).